The following is a 249-amino-acid chain: Small ribosomal subunit protein eS6 (249 aa).

A compositionally biased stretch (basic and acidic residues) spans 216 to 229 (RMKEAKEKRQEQIA). Positions 216–249 (RMKEAKEKRQEQIAKRRRLSSLRASTSKSESSQK) are disordered. 5 positions are modified to phosphoserine: Ser235, Ser236, Ser240, Ser244, and Ser247. The span at 236-249 (SLRASTSKSESSQK) shows a compositional bias: low complexity.

Belongs to the eukaryotic ribosomal protein eS6 family. Component of the small ribosomal subunit. Part of the small subunit (SSU) processome, composed of more than 70 proteins and the RNA chaperone small nucleolar RNA (snoRNA) U3. In terms of processing, ribosomal protein S6 is the major substrate of protein kinases in eukaryote ribosomes. The phosphorylation is stimulated by growth factors, tumor promoting agents, and mitogens. It is dephosphorylated at growth arrest.

The protein resides in the cytoplasm. Its subcellular location is the nucleus. The protein localises to the nucleolus. Its function is as follows. Component of the 40S small ribosomal subunit. Plays an important role in controlling cell growth and proliferation through the selective translation of particular classes of mRNA. Part of the small subunit (SSU) processome, first precursor of the small eukaryotic ribosomal subunit. During the assembly of the SSU processome in the nucleolus, many ribosome biogenesis factors, an RNA chaperone and ribosomal proteins associate with the nascent pre-rRNA and work in concert to generate RNA folding, modifications, rearrangements and cleavage as well as targeted degradation of pre-ribosomal RNA by the RNA exosome. The protein is Small ribosomal subunit protein eS6 (RPS6) of Gallus gallus (Chicken).